The primary structure comprises 492 residues: Transmembrane protein 39B (492 aa).

Residues 1–53 are disordered; it reads MGGRRGPNRTSYYRNPLCEPGSSGASGGGHSSSASVSSVRSRSRTTSGTGLSS. Asn-8 carries an N-linked (GlcNAc...) asparagine glycan. The segment covering 31–53 has biased composition (low complexity); that stretch reads SSSASVSSVRSRSRTTSGTGLSS. 8 helical membrane passes run 77–97, 115–135, 153–175, 185–205, 288–308, 322–342, 421–441, and 447–467; these read SILFELQLFFCQLIALFVHYI, TSLNFHLIDFNLLMVTAIVLG, SLFRSILLFLTRFTVLTATGWSL, TYSFLNLLFLCYPFGMYIPFL, EVLVSSMLSAYYVAFVPVWFV, LFLLVSISTSVILMQHLLPAS, ILNILLLLEGAVIVYQLYSLM, and HQTISLALILFSNYYAFFKLL.

Belongs to the TMEM39 family.

Its subcellular location is the endoplasmic reticulum membrane. Functionally, may protect the cells against DNA damage caused by exposure to the cold-warming stress and facilitates tissue damage repair during the recovery phase. In Mus musculus (Mouse), this protein is Transmembrane protein 39B.